The chain runs to 112 residues: Protein Churchill (112 aa).

Positions 2, 5, 30, 33, 59, 61, 64, 66, 71, 88, and 91 each coordinate Zn(2+).

This sequence belongs to the Churchill family.

Transcriptional activator that mediates FGF signaling during neural development. Plays a role in the regulation of cell movement. Does not bind DNA by itself. The chain is Protein Churchill (Churc1) from Mus musculus (Mouse).